A 42-amino-acid chain; its full sequence is Osteocalcin (42 aa).

Residues 1–40 (YLDHGLGAPAPYVDPLEPKREVDELADQMGFQEAYRRFYG) form the Gla domain. At P9 the chain carries 4-hydroxyproline. 3 residues coordinate Ca(2+): E17, E21, and D23. A 4-carboxyglutamate mark is found at E17 and E21.

The protein belongs to the osteocalcin/matrix Gla protein family. Post-translationally, gamma-carboxyglutamic acid residues are formed by vitamin K dependent carboxylation. These residues are essential for the binding of calcium.

Its subcellular location is the secreted. The carboxylated form is one of the main organic components of the bone matrix, which constitutes 1-2% of the total bone protein: it acts as a negative regulator of bone formation and is required to limit bone formation without impairing bone resorption or mineralization. The carboxylated form binds strongly to apatite and calcium. Functionally, the uncarboxylated form acts as a hormone secreted by osteoblasts, which regulates different cellular processes, such as energy metabolism, male fertility and brain development. Regulates of energy metabolism by acting as a hormone favoring pancreatic beta-cell proliferation, insulin secretion and sensitivity and energy expenditure. Uncarboxylated osteocalcin hormone also promotes testosterone production in the testes: acts as a ligand for G protein-coupled receptor GPRC6A at the surface of Leydig cells, initiating a signaling response that promotes the expression of enzymes required for testosterone synthesis in a CREB-dependent manner. Also acts as a regulator of brain development: osteocalcin hormone crosses the blood-brain barrier and acts as a ligand for GPR158 on neurons, initiating a signaling response that prevents neuronal apoptosis in the hippocampus, favors the synthesis of all monoamine neurotransmitters and inhibits that of gamma-aminobutyric acid (GABA). Osteocalcin also crosses the placenta during pregnancy and maternal osteocalcin is required for fetal brain development. The protein is Osteocalcin of Camelops hesternus (Western camel).